A 191-amino-acid polypeptide reads, in one-letter code: Protein RER1 homolog (191 aa).

Transmembrane regions (helical) follow at residues 35-55 (AFRWVIALISLVFFASRIILL), 57-77 (GFYIVAYAVGIYYLNLFLLFL), and 135-155 (FFDVPVFWPILVMYFFILTFL).

This sequence belongs to the RER1 family.

It localises to the membrane. May be involved in protein transport along the secretory pathway. The polypeptide is Protein RER1 homolog (rer-1) (Caenorhabditis elegans).